We begin with the raw amino-acid sequence, 192 residues long: Peptidyl-tRNA hydrolase (192 aa).

Residue Tyr17 coordinates tRNA. Catalysis depends on His22, which acts as the Proton acceptor. 3 residues coordinate tRNA: Tyr68, Asn70, and Asn116.

The protein belongs to the PTH family. In terms of assembly, monomer.

Its subcellular location is the cytoplasm. It carries out the reaction an N-acyl-L-alpha-aminoacyl-tRNA + H2O = an N-acyl-L-amino acid + a tRNA + H(+). In terms of biological role, hydrolyzes ribosome-free peptidyl-tRNAs (with 1 or more amino acids incorporated), which drop off the ribosome during protein synthesis, or as a result of ribosome stalling. Its function is as follows. Catalyzes the release of premature peptidyl moieties from peptidyl-tRNA molecules trapped in stalled 50S ribosomal subunits, and thus maintains levels of free tRNAs and 50S ribosomes. The polypeptide is Peptidyl-tRNA hydrolase (Mycolicibacterium vanbaalenii (strain DSM 7251 / JCM 13017 / BCRC 16820 / KCTC 9966 / NRRL B-24157 / PYR-1) (Mycobacterium vanbaalenii)).